Reading from the N-terminus, the 1384-residue chain is DNA-directed RNA polymerase subunit beta (1384 aa).

This sequence belongs to the RNA polymerase beta chain family. The RNAP catalytic core consists of 2 alpha, 1 beta, 1 beta' and 1 omega subunit. When a sigma factor is associated with the core the holoenzyme is formed, which can initiate transcription.

The catalysed reaction is RNA(n) + a ribonucleoside 5'-triphosphate = RNA(n+1) + diphosphate. DNA-dependent RNA polymerase catalyzes the transcription of DNA into RNA using the four ribonucleoside triphosphates as substrates. This is DNA-directed RNA polymerase subunit beta from Xylella fastidiosa (strain M23).